Consider the following 175-residue polypeptide: Movement protein (175 aa).

The tract at residues 30–47 (ADLDDDEEVTTGQEELFL) is homodimerization. The segment at 50–156 (EQAQARHLFS…QRLTSMERNG (107 aa)) is RNA-binding. Disordered regions lie at residues 58 to 89 (FSRK…MEYS) and 103 to 175 (SSSP…VLHR). The segment covering 63 to 74 (ISREVPADESRS) has biased composition (basic and acidic residues). Residues serine 64 and serine 133 each carry the phosphoserine modification. Composition is skewed to polar residues over residues 115 to 141 (PSLT…SQSP) and 148 to 169 (RLTS…SSTK).

Belongs to the polerovirus movement protein family. Homodimer. Phosphorylated.

It localises to the host cell junction. Its subcellular location is the host plasmodesma. The protein resides in the host Golgi apparatus. Functionally, together with movement protein P3a, facilitates long-distance movement of virions in host. Transports viral genome to neighboring plant cells directly through plasmosdesmata, without any budding. The movement protein allows efficient cell to cell propagation, by bypassing the host cell wall barrier. Binds ssRNA. The chain is Movement protein from Beta vulgaris (Sugar beet).